Reading from the N-terminus, the 93-residue chain is SH3 domain-binding glutamic acid-rich-like protein 3 (93 aa).

An N-acetylserine modification is found at serine 2. The O-linked (GalNAc...) serine glycan is linked to serine 2. The Glutaredoxin domain occupies 2-93 (SGRRVYSTSV…NTLQEFLKLA (92 aa)). O-linked (GalNAc...) threonine glycans are attached at residues threonine 9 and threonine 12.

It belongs to the SH3BGR family. In terms of assembly, homodimer. Interacts with MYO1C (via its IQ motifs); the interaction is dependent on calcium and takes place at membrane ruffles. Post-translationally, may be glycosylated.

The protein resides in the cytoplasm. It is found in the cytosol. The protein localises to the cell projection. It localises to the ruffle membrane. Its subcellular location is the nucleus. Its function is as follows. Could act as a modulator of glutaredoxin biological activity. May play a role in cytoskeleton organization. The chain is SH3 domain-binding glutamic acid-rich-like protein 3 (SH3BGRL3) from Pongo abelii (Sumatran orangutan).